A 206-amino-acid chain; its full sequence is Oligoribonuclease (206 aa).

The Exonuclease domain occupies 20–183 (LVWLDMEMTG…ADIHESIDEL (164 aa)). Tyr141 is an active-site residue.

This sequence belongs to the oligoribonuclease family.

The protein resides in the cytoplasm. Functionally, 3'-to-5' exoribonuclease specific for small oligoribonucleotides. This Burkholderia ambifaria (strain ATCC BAA-244 / DSM 16087 / CCUG 44356 / LMG 19182 / AMMD) (Burkholderia cepacia (strain AMMD)) protein is Oligoribonuclease.